Consider the following 151-residue polypeptide: IFN signaling evasion protein OPG029 (151 aa).

It belongs to the orthopoxvirus OPG029 family. Interacts with host TANK, TBKBP1 and AZI2; these interactions prevent interferon production. Interacts with host STAT2.

In terms of biological role, prevents establishment of cellular antiviral state by blocking virus-induced phosphorylation and activation of interferon regulatory factors 3/IRF3 and 7/IRF7, transcription factors critical for the induction of interferons alpha and beta. This blockage is produced through the inhibition of host TBK1, by binding host TBK1 adapter proteins TBKBP1 and AZI2, thereby producing a strong inhibition of the phosphorylation and activation of IRF3 and IRF7. Also acts as an inhibitor of the cellular response to type I IFN by interacting with host STAT2. Mechanistically, exerts its inhibitory effect after host ISGF3 complex (composed of STAT1, STAT2 and IRF9) binding to the interferon stimulated response element (ISRE). This chain is IFN signaling evasion protein OPG029 (OPG029), found in Homo sapiens (Human).